A 204-amino-acid polypeptide reads, in one-letter code: CASP-like protein 2A1 (204 aa).

The span at 1–11 shows a compositional bias: basic and acidic residues; sequence MEKSNDHDKAS. The segment at 1-25 is disordered; that stretch reads MEKSNDHDKASHGGSGGGATEKWEE. Over 1–32 the chain is Cytoplasmic; the sequence is MEKSNDHDKASHGGSGGGATEKWEETSPGIRT. The helical transmembrane segment at 33–53 threads the bilayer; the sequence is AETMLRLAPVGLCVAALVVML. Topologically, residues 54–74 are extracellular; it reads KDSETNEFGSISYSNLTAFRY. Residue Asn68 is glycosylated (N-linked (GlcNAc...) asparagine). The helical transmembrane segment at 75–95 threads the bilayer; that stretch reads LVHANGICAGYSLLSAAIAAM. Topologically, residues 96–113 are cytoplasmic; sequence PRSSSTMPRVWTFFCLDQ. Residues 114–134 traverse the membrane as a helical segment; it reads LLTYLVLAAGAVSAEVLYLAY. The Extracellular segment spans residues 135–155; that stretch reads NGDSAITWSDACSSYGGFCHR. Residues 156 to 176 traverse the membrane as a helical segment; sequence ATASVIITFFVVCFYILLSLI. The Cytoplasmic segment spans residues 177–204; the sequence is SSYKLFTRFDPPSIVDSDKTLEVAVFGS.

The protein belongs to the Casparian strip membrane proteins (CASP) family. In terms of assembly, homodimer and heterodimers.

It localises to the cell membrane. This Arabidopsis lyrata subsp. lyrata (Lyre-leaved rock-cress) protein is CASP-like protein 2A1.